A 130-amino-acid polypeptide reads, in one-letter code: Fluoride-specific ion channel FluC (130 aa).

The next 4 helical transmembrane spans lie at 2-22, 36-56, 71-91, and 100-120; these read GLLLLLVGIGGGFGAMARFAL, GILLCNIIGSLIIGMMAAFLI, FLLVTGFLGGFTTFSSFSLDI, and IFIAIGYIMVSVLASLIAVIL. Na(+) contacts are provided by Gly-79 and Thr-82.

This sequence belongs to the fluoride channel Fluc/FEX (TC 1.A.43) family.

It is found in the cell inner membrane. The catalysed reaction is fluoride(in) = fluoride(out). Its activity is regulated as follows. Na(+) is not transported, but it plays an essential structural role and its presence is essential for fluoride channel function. Its function is as follows. Fluoride-specific ion channel. Important for reducing fluoride concentration in the cell, thus reducing its toxicity. In Francisella tularensis subsp. mediasiatica (strain FSC147), this protein is Fluoride-specific ion channel FluC.